A 502-amino-acid chain; its full sequence is Sodium/proline symporter (502 aa).

Over 1-5 the chain is Periplasmic; that stretch reads MAIST. The chain crosses the membrane as a helical span at residues 6–26; it reads PMLVTFCVYIFGMILIGFIAW. At 27-41 the chain is on the cytoplasmic side; it reads RSTKNFDDYILGGRS. Hydrophilic regions lie at residues 27 to 66 and 88 to 124; these read RSTK…GLPG and INWK…KSRI. Residues 42–62 traverse the membrane as a helical segment; sequence LGPFVTALSAGASDMSGWLLM. Over 63–67 the chain is Periplasmic; sequence GLPGA. The chain crosses the membrane as a helical span at residues 68–88; that stretch reads VFLSGISESWIAIGLTLGAWI. At 89 to 126 the chain is on the cytoplasmic side; the sequence is NWKLVAGRLRVHTEYNNNALTLPDYFTGRFEDKSRILR. Residues 127 to 147 form a helical membrane-spanning segment; that stretch reads IISALVILLFFTIYCASGIVA. Residues 148–162 are Periplasmic-facing; the sequence is GARLFESTFGMSYET. The interval 151–162 is hydrophilic; that stretch reads LFESTFGMSYET. Residues 163 to 183 traverse the membrane as a helical segment; that stretch reads ALWAGAAATILYTFIGGFLAV. The Cytoplasmic portion of the chain corresponds to 184 to 192; sequence SWTDTVQAS. Positions 185–189 are hydrophilic; it reads WTDTV. Residues 193–213 form a helical membrane-spanning segment; sequence LMIFALILTPVIVIISVGGFG. 3 hydrophilic regions span residues 214 to 231, 249 to 274, and 296 to 319; these read DSLE…DMLK, FGQP…RRIS, and FNDH…ELAQ. Topologically, residues 214 to 234 are periplasmic; that stretch reads DSLEVIKQKSIENVDMLKGLN. The helical transmembrane segment at 235–255 threads the bilayer; that stretch reads FVAIISLMGWGLGYFGQPHIL. Topologically, residues 256-275 are cytoplasmic; that stretch reads ARFMAADSHHSIVHARRISM. A helical membrane pass occupies residues 276–296; the sequence is TWMILCLAGAVAVGFFGIAYF. Residues 297 to 319 are Periplasmic-facing; that stretch reads NDHPALAGAVNQNAERVFIELAQ. A helical transmembrane segment spans residues 320–340; it reads ILFNPWIAGILLSAILAAVMS. The Cytoplasmic segment spans residues 341–370; it reads TLSCQLLVCSSAITEDLYKAFLRKHASQKE. A hydrophilic region spans residues 341 to 370; sequence TLSCQLLVCSSAITEDLYKAFLRKHASQKE. A helical transmembrane segment spans residues 371 to 391; sequence LVWVGRVMVLVVALVAIALAA. Topologically, residues 392–397 are periplasmic; it reads NPENRV. Residues 392–397 form a hydrophilic region; that stretch reads NPENRV. A helical transmembrane segment spans residues 398 to 418; sequence LGLVSYAWAGFGAAFGPVVLF. Over 419 to 427 the chain is Cytoplasmic; sequence SVMWSRMTR. 2 hydrophilic regions span residues 424–430 and 446–448; these read RMTRNGA and QFG. The next 2 membrane-spanning stretches (helical) occupy residues 428 to 448 and 449 to 469; these read NGAL…KQFG and WLGL…IVVF. Over 470–502 the chain is Cytoplasmic; that stretch reads SLLGKAPSAAMQKRFAEADAHYHSAPPSRLQES. The segment at 476–502 is hydrophilic; the sequence is PSAAMQKRFAEADAHYHSAPPSRLQES.

It belongs to the sodium:solute symporter (SSF) (TC 2.A.21) family. As to quaternary structure, has been isolated from inner membrane preparations as a homodimer.

It localises to the cell inner membrane. It catalyses the reaction L-proline(in) + Na(+)(in) = L-proline(out) + Na(+)(out). With respect to regulation, activity is stimulated by phosphatidylethanolamine and phosphatidylglycerol, but not by phosphatidylcholine and cardiolipin. Proline uptake is inhibited by the sulfhydryl reagent N-ethylmaleimide (NEM). Proline, in the presence of Na(+) or Li(+), protects the carrier functions from NEM-inactivation. Its function is as follows. Catalyzes the sodium-dependent uptake of extracellular L-proline. This protein is also capable of using lithium as the transport cation. Also catalyzes the uptake of propionate. In Escherichia coli (strain K12), this protein is Sodium/proline symporter (putP).